The chain runs to 481 residues: Tripartite motif-containing protein 10 (481 aa).

An RING-type zinc finger spans residues 16–61 (CPICQGTLREPVTIDCGHNFCRACLTRYCEIPGPDLEESPTCPLCK). The segment at 94-135 (GEEDVCQEHGEKIYFFCEDDEMQLCVVCREAGEHATHTMRFL) adopts a B box-type zinc-finger fold. Residues Cys99, His102, Cys121, and His127 each contribute to the Zn(2+) site. A coiled-coil region spans residues 142–177 (YREQIHKCLKRLRKEREETQEIQSRENKRMQVLLTQ). Residues 292–481 (REMKMFLEKL…GRGSSFFLSS (190 aa)) enclose the B30.2/SPRY domain.

This sequence belongs to the TRIM/RBCC family. In terms of assembly, interacts with IFNAR1; this interaction prevents association of IFNAR1 with TYK2.

The protein resides in the cytoplasm. In terms of biological role, E3 ligase that plays an essential role in the differentiation and survival of terminal erythroid cells. May directly bind to PTEN and promote its ubiquitination, resulting in its proteasomal degradation and activation of hypertrophic signaling. In addition, plays a role in immune response regulation by repressing the phosphorylation of STAT1 and STAT2 in the interferon/JAK/STAT signaling pathway independent of its E3 ligase activity. Mechanistically, interacts with the intracellular domain of IFNAR1 and thereby inhibits the association of TYK2 and IFNAR1. The protein is Tripartite motif-containing protein 10 (TRIM10) of Pan troglodytes (Chimpanzee).